We begin with the raw amino-acid sequence, 47 residues long: PhoP/PhoQ regulator MgrB (47 aa).

The helical transmembrane segment at 6 to 26 (WVVLVVVVLACLLLWAQVFNM) threads the bilayer.

It belongs to the MgrB family. May form homooligomers. Probably interacts with the periplasmic domain of PhoQ.

Its subcellular location is the cell inner membrane. Its function is as follows. PhoP-regulated transcription is redox-sensitive, being activated when the periplasm becomes more reducing. MgrB acts between DsbA/DsbB and PhoP/PhoQ in this pathway. Represses PhoP/PhoQ signaling, possibly by binding to the periplasmic domain of PhoQ, altering its activity and that of downstream effector PhoP. The sequence is that of PhoP/PhoQ regulator MgrB from Escherichia coli O157:H7.